A 442-amino-acid chain; its full sequence is MASSASMLINYPTTFCGVRNSSNPNNDQFSDQINIPSSLNNNINISKITSKTNKIIPKAVASPVIPSSINSNNITTTTPNIKRIIHEFDPKVPAEDGFTPPSTWYTDPSLYSHELDRIFSKGWQVAGYSDQIKEPNQYFTGSLGNVEYLVCRDGQGKVHAFHNVCTHRASILACGTGKKSCFVCPYHGWVFGLDGSLMKATKTENQVFDPKELGLVTLKVAIWGPFVLISLDRSGSEGTEDVGKEWIGSCAEEVKKHAFDPSLQFINRSEFPMESNWKVFCDNYLDSAYHVPYAHKYYAAELDFDTYKTDLLEKVVIQRVASSSNKPNGFDRLGSEAFYAFIYPNFAVERYGPWMTTMHIGPLGPRKCKLVVDYYLENAMMNDKPYIEKSIMINDNVQKEDVVLCESVQRGLETPAYRSGRYVMPIEKGIHHFHCWLHQTLN.

The transit peptide at 1–58 directs the protein to the chloroplast; sequence MASSASMLINYPTTFCGVRNSSNPNNDQFSDQINIPSSLNNNINISKITSKTNKIIPK. In terms of domain architecture, Rieske spans 123–229; that stretch reads WQVAGYSDQI…VAIWGPFVLI (107 aa). [2Fe-2S] cluster-binding residues include cysteine 165, histidine 167, cysteine 184, and histidine 187. Histidine 290 and histidine 295 together coordinate Fe cation.

This sequence belongs to the choline monooxygenase family. It depends on [2Fe-2S] cluster as a cofactor. Requires Fe cation as cofactor. Mg(2+) serves as cofactor.

It is found in the plastid. It localises to the chloroplast stroma. It catalyses the reaction choline + 2 reduced [2Fe-2S]-[ferredoxin] + O2 + 2 H(+) = betaine aldehyde hydrate + 2 oxidized [2Fe-2S]-[ferredoxin] + H2O. The protein operates within amine and polyamine biosynthesis; betaine biosynthesis via choline pathway; betaine aldehyde from choline (monooxygenase route): step 1/1. Its function is as follows. Catalyzes the first step of the osmoprotectant glycine betaine synthesis. This Amaranthus tricolor (Joseph's coat) protein is Choline monooxygenase, chloroplastic (CMO).